A 148-amino-acid polypeptide reads, in one-letter code: Large ribosomal subunit protein bL9 (148 aa).

Belongs to the bacterial ribosomal protein bL9 family.

Its function is as follows. Binds to the 23S rRNA. This chain is Large ribosomal subunit protein bL9, found in Heliobacterium modesticaldum (strain ATCC 51547 / Ice1).